Here is a 339-residue protein sequence, read N- to C-terminus: Methylthioribose-1-phosphate isomerase (339 aa).

Residues 50 to 52 (RGA), arginine 84, and glutamine 186 each bind substrate. Catalysis depends on aspartate 227, which acts as the Proton donor. 237–238 (NK) contributes to the substrate binding site.

This sequence belongs to the eIF-2B alpha/beta/delta subunits family. MtnA subfamily.

It catalyses the reaction 5-(methylsulfanyl)-alpha-D-ribose 1-phosphate = 5-(methylsulfanyl)-D-ribulose 1-phosphate. It functions in the pathway amino-acid biosynthesis; L-methionine biosynthesis via salvage pathway; L-methionine from S-methyl-5-thio-alpha-D-ribose 1-phosphate: step 1/6. Functionally, catalyzes the interconversion of methylthioribose-1-phosphate (MTR-1-P) into methylthioribulose-1-phosphate (MTRu-1-P). This Sulfurihydrogenibium sp. (strain YO3AOP1) protein is Methylthioribose-1-phosphate isomerase.